Reading from the N-terminus, the 880-residue chain is Leucine--tRNA ligase (880 aa).

Positions 46-56 (PYPSGALHMGH) match the 'HIGH' region motif. The 'KMSKS' region signature appears at 638-642 (KMSKS). Lysine 641 lines the ATP pocket.

It belongs to the class-I aminoacyl-tRNA synthetase family.

The protein resides in the cytoplasm. The catalysed reaction is tRNA(Leu) + L-leucine + ATP = L-leucyl-tRNA(Leu) + AMP + diphosphate. The polypeptide is Leucine--tRNA ligase (Xanthomonas euvesicatoria pv. vesicatoria (strain 85-10) (Xanthomonas campestris pv. vesicatoria)).